The sequence spans 742 residues: Photosystem I P700 chlorophyll a apoprotein A2 (742 aa).

Transmembrane regions (helical) follow at residues 46–69 (LFST…FHIA), 135–158 (LFQG…LHLQ), 175–199 (LNHH…HVAI), 273–291 (IAHH…GHMY), 336–359 (LHFQ…QHMG), 375–401 (SALY…IFFV), 423–445 (ALIS…IYVH), and 525–543 (FLVH…LILI). C567 and C576 together coordinate [4Fe-4S] cluster. 2 helical membrane-spanning segments follow: residues 583-604 (ATYL…YWHW) and 651-673 (LSPW…MFLI). 3 residues coordinate divinyl chlorophyll a: H662, M670, and Y678. W679 is a binding site for phylloquinone. The chain crosses the membrane as a helical span at residues 715-735 (LVGLTHFTVGNFVTFGAFVIA).

It belongs to the PsaA/PsaB family. In terms of assembly, the PsaA/B heterodimer binds the P700 divinyl chlorophyll special pair and subsequent electron acceptors. PSI consists of a core antenna complex that captures photons, and an electron transfer chain that converts photonic excitation into a charge separation. The cyanobacterial PSI reaction center is composed of one copy each of PsaA,B,C,D,E,F,I,J,K,L,M and X, and forms trimeric complexes. The cofactor is PSI electron transfer chain: 5 divinyl chlorophyll a, 1 divinyl chlorophyll a', 2 phylloquinones and 3 4Fe-4S clusters. PSI core antenna: 90 divinyl chlorophyll a, 22 carotenoids, 3 phospholipids and 1 galactolipid. P700 is a divinyl chlorophyll a/divinyl chlorophyll a' dimer, A0 is one or more divinyl chlorophyll a, A1 is one or both phylloquinones and FX is a shared 4Fe-4S iron-sulfur center..

The protein localises to the cellular thylakoid membrane. The enzyme catalyses reduced [plastocyanin] + hnu + oxidized [2Fe-2S]-[ferredoxin] = oxidized [plastocyanin] + reduced [2Fe-2S]-[ferredoxin]. PsaA and PsaB bind P700, the primary electron donor of photosystem I (PSI), as well as the electron acceptors A0, A1 and FX. PSI is a plastocyanin/cytochrome c6-ferredoxin oxidoreductase, converting photonic excitation into a charge separation, which transfers an electron from the donor P700 chlorophyll pair to the spectroscopically characterized acceptors A0, A1, FX, FA and FB in turn. Oxidized P700 is reduced on the lumenal side of the thylakoid membrane by plastocyanin or cytochrome c6. In Prochlorococcus marinus (strain NATL2A), this protein is Photosystem I P700 chlorophyll a apoprotein A2.